An 830-amino-acid chain; its full sequence is Cadherin-16 (830 aa).

A signal peptide spans 1-21; that stretch reads MISARPWLLYLSVIQAFTTEA. Topologically, residues 22–788 are extracellular; the sequence is QPAESLHTEV…MKGMPTKLSA (767 aa). Cadherin domains are found at residues 27-128, 133-237, 244-338, 343-451, 457-566, and 571-667; these read LHTE…VPQF, YRAQ…SIVE, EPVH…APVC, PTVN…APEF, GPVT…PLKL, and YETS…VPAL. Residues N519, N604, and N724 are each glycosylated (N-linked (GlcNAc...) asparagine). Residues 668-788 are ectodomain G; it reads TLSAGPSRHL…MKGMPTKLSA (121 aa). A helical transmembrane segment spans residues 789–809; the sequence is VGVLLGTLAAIGFILILVFTH. The Cytoplasmic segment spans residues 810 to 830; it reads LALARKDLDQPADSVPLKAAV. The residue at position 823 (S823) is a Phosphoserine.

In terms of tissue distribution, kidney specific.

It localises to the cell membrane. Its function is as follows. Cadherins are calcium-dependent cell adhesion proteins. They preferentially interact with themselves in a homophilic manner in connecting cells; cadherins may thus contribute to the sorting of heterogeneous cell types. The protein is Cadherin-16 (Cdh16) of Mus musculus (Mouse).